We begin with the raw amino-acid sequence, 177 residues long: Large ribosomal subunit protein uL6 (177 aa).

Residues 152 to 171 are compositionally biased toward basic and acidic residues; the sequence is RPPEPYKGKGVRYDDEEVRR. Residues 152–177 form a disordered region; that stretch reads RPPEPYKGKGVRYDDEEVRRKEAKKK.

Belongs to the universal ribosomal protein uL6 family. Part of the 50S ribosomal subunit.

In terms of biological role, this protein binds to the 23S rRNA, and is important in its secondary structure. It is located near the subunit interface in the base of the L7/L12 stalk, and near the tRNA binding site of the peptidyltransferase center. This is Large ribosomal subunit protein uL6 from Shewanella putrefaciens (strain CN-32 / ATCC BAA-453).